A 401-amino-acid chain; its full sequence is Multidrug resistance protein MdtH (401 aa).

11 helical membrane passes run 13-33, 34-54, 78-95, 99-116, 139-159, 165-185, 214-234, 243-263, 289-309, 340-360, and 365-385; these read YFLL…FPLI, SIHF…ALGL, MIVT…FIAL, PWIL…GTLF, LLLM…SWLL, FVCW…ALFL, VLTL…FPII, AAVK…LYPI, FPVG…LFYL, LGLA…YDTG, and IPQL…YALH.

This sequence belongs to the major facilitator superfamily. DHA1 family. MdtH (TC 2.A.1.2.21) subfamily.

It localises to the cell inner membrane. The chain is Multidrug resistance protein MdtH from Photorhabdus laumondii subsp. laumondii (strain DSM 15139 / CIP 105565 / TT01) (Photorhabdus luminescens subsp. laumondii).